Here is an 894-residue protein sequence, read N- to C-terminus: Protein SEY1 (894 aa).

Residues 1-64 (MGLDVDSVPI…PRALEPAQVT (64 aa)) are disordered. The Cytoplasmic segment spans residues 1 to 768 (MGLDVDSVPI…KRGTVSSMSQ (768 aa)). Low complexity predominate over residues 9-24 (PIAEAAAPSSMAATEP). The span at 40-53 (APMNTDSSRETMPT) shows a compositional bias: polar residues. The GB1/RHD3-type G domain maps to 137-359 (GFGYDICAVL…DESYVFKTEY (223 aa)). 147–154 (GSQSTGKS) contacts GTP. Residues 536-559 (KVDDERAQLLDELHTLARTLRANE) are a coiled coil. A helical membrane pass occupies residues 769-789 (VPIWMYGVLVVLGWNEAMAVL). Residues 790–792 (RNP) are Lumenal-facing. The helical transmembrane segment at 793-813 (VYFTLLCMVLATAYVIWRLNL) threads the bilayer. Residues 814–894 (GTPVLALASG…DSHPRLPASF (81 aa)) are Cytoplasmic-facing. Residues 841 to 894 (DGTPPSANRAREYRVPSGSTAHVSEKTPHRPLTTSGAAEADTVEDSHPRLPASF) form a disordered region.

Belongs to the TRAFAC class dynamin-like GTPase superfamily. GB1/RHD3 GTPase family. RHD3 subfamily.

It is found in the endoplasmic reticulum membrane. Functionally, cooperates with the reticulon proteins and tubule-shaping DP1 family proteins to generate and maintain the structure of the tubular endoplasmic reticulum network. Has GTPase activity, which is required for its function in ER organization. The chain is Protein SEY1 from Malassezia globosa (strain ATCC MYA-4612 / CBS 7966) (Dandruff-associated fungus).